The chain runs to 74 residues: Small ribosomal subunit protein bS18 (74 aa).

This sequence belongs to the bacterial ribosomal protein bS18 family. In terms of assembly, part of the 30S ribosomal subunit. Forms a tight heterodimer with protein bS6.

Functionally, binds as a heterodimer with protein bS6 to the central domain of the 16S rRNA, where it helps stabilize the platform of the 30S subunit. This is Small ribosomal subunit protein bS18 from Sphingopyxis alaskensis (strain DSM 13593 / LMG 18877 / RB2256) (Sphingomonas alaskensis).